The following is a 228-amino-acid chain: Putative NAC domain-containing protein 61 (228 aa).

The region spanning 5 to 156 is the NAC domain; that stretch reads LSVGFRFYPT…KSGSSRAFDR (152 aa). Disordered stretches follow at residues 77 to 96 and 166 to 197; these read ARGGRPSRTTGSGYWKATGS and RNLPSNGVETSSRATISTSPETSHSGGNQVDL. Low complexity predominate over residues 80–89; it reads GRPSRTTGSG. A compositionally biased stretch (polar residues) spans 168–193; sequence LPSNGVETSSRATISTSPETSHSGGN.

It localises to the nucleus. In Arabidopsis thaliana (Mouse-ear cress), this protein is Putative NAC domain-containing protein 61 (NAC061).